Here is a 409-residue protein sequence, read N- to C-terminus: MSLPFYTIDDFNLEDKTVLVRVDINSPVDPSTGSILDDTKIKLHAETIDEISKKGAKTVVLAHQSRPGKKDFTTLQQHAKALSNILNRPVDYIDDIFGTAAREEIKRLKKGDILLLENVRFYPEEILKRDPHQQAETHMVRKLYPIIDIFINDAFAAAHRSQPSLVGFAVKLPSGAGRIMEKELKSLYGAVDNAEKPCVYVLGGVKVDDSIMVLENVLRNGSADYVLTTGLVANIFLWASGINLGKYNEDFIINKGYIDFVEKGKQLLEEFDGQIKMPDDVAVCVDNARVEYCTKNIPNKPIYDIGTNTITEYAKFIRDAKTIFANGPAGVFEQEGFSIGTEDILNTIASSNGYSIIGGGHLAAAANQMGLSSGITHISSGGGASINLLAGEKLPVVEILTEVKMKGRK.

Residues 23–25 (DIN), 63–66 (HQSR), arginine 120, and arginine 160 each bind substrate. ATP is bound by residues glutamate 333 and 359–362 (GGHL).

The protein belongs to the phosphoglycerate kinase family. As to quaternary structure, monomer.

It is found in the cytoplasm. The catalysed reaction is (2R)-3-phosphoglycerate + ATP = (2R)-3-phospho-glyceroyl phosphate + ADP. It participates in carbohydrate degradation; glycolysis; pyruvate from D-glyceraldehyde 3-phosphate: step 2/5. This Methanobacterium bryantii protein is Phosphoglycerate kinase (pgk).